Consider the following 418-residue polypeptide: Chromo domain-containing protein rhino (418 aa).

A Chromo domain is found at 24–74; it reads YVVEKILGKRFVNGRPQVLVKWSGFPNENNTWEPLENVGNCMKLVSDFESE. Low complexity-rich tracts occupy residues 84 to 99 and 107 to 120; these read AKSV…SSGP and SSSK…KSVQ. Disordered regions lie at residues 84–167 and 199–337; these read AKSV…TDST and PTKD…RCPR. Basic residues predominate over residues 131–143; the sequence is NQKKGKNIKKTAG. Polar residues predominate over residues 152–167; the sequence is PKTQMPSTSQVSTDST. Over residues 218–228 the composition is skewed to basic and acidic residues; it reads RLIEFPQREDA. Over residues 258–275 the composition is skewed to low complexity; the sequence is GESSSSMSLPTVSSTSSE. The span at 276–285 shows a compositional bias: basic and acidic residues; it reads KSIKVTKSEP. The required for interaction with del/deadlock stretch occupies residues 353–418; that stretch reads TKPFGVNRGL…FESLRIIVPK (66 aa).

As to quaternary structure, homodimer in solution. Dimerization is essential for chromatin binding. Component of the Rhino-Deadlock-Cutoff (RDC) complex, composed of rhi/rhino, del/deadlock and cuff/cutoff. Interacts (via C-terminus) with del/deadlock (via N-terminus); this interaction is direct. Two copies of del/deadlock associate with each rhi/rhino dimer. Interacts with cuff/cutoff; this interaction is indirect and is mediated by del/deadlock. Interacts (via Chromo domain) with kipf/kipferl (via C2H2 type zinc finger 4). Interacts (via Chromo domain) with His3/histone H3 (via N-terminus di- or tri-methylated on 'Lys-10' (H3K9me2/3)); this interaction is direct. Two His3 N-terminal tails oriented anti-parallel to each other are required for dimer binding to His3. As to expression, female specific, expressed in both somatic and germline cells but highly enriched in ovaries. In the germarium of the developing oocyte expressed in germline stem cells, cystoblasts and developing germline cysts. Expressed in nurse cells in the germarium and egg chamber.

Its subcellular location is the nucleus. It localises to the chromosome. In terms of biological role, involved in piRNA (piwi-interacting RNA)-mediated transposon repression. May be involved in formation of the perinuclear nuage, a subcellular structure implicated in RNA processing that may be involved in transposon RNA surveillance and silencing. Required for ping-pong amplification during piRNA biogenesis, probably by promoting transcription of piRNA precursors. As part of the Rhino-Deadlock-Cutoff (RDC) Complex associates with, and drives non-canonical transcription of germline specific dual-strand piRNA clusters 80F, 38C and 42AB, but not single-stranded piRNA cluster 20A. Induction of piRNA expression is potentially achieved through a mechanism that prevents transcriptional termination and leads to readthrough from flanking transcription units. Recruited to specific chromatin regions by a combination of H3K9me2/3 histone methylation and differentially expressed sequence-specific recruitment factors. This association may involve direct interaction with DNA. Associates with chromatin upon exposure to homologous piRNA and facilitates transcriptional read-through. As part of the RDC complex, involved in suppression of splicing. In ovaries, recruitment to specific heterochromatin clusters is nucleated and stabilized by kipf/kipferl. During oogenesis, involved in axis specification and may regulate chromosome condensation at the onset of a mitotic-like phase that occurs during nurse cell chromosome duplication. Involved in the distribution of mRNAs for proteins that play a role in anterior-posterior and dorsal-ventral axes specification during development of the oocyte, including grk/gurken, osk/oskar and vas/vasa. Mitigates meiotic double strand breaks and interacts with DNA damage signaling to mediate axis specification. This is Chromo domain-containing protein rhino from Drosophila melanogaster (Fruit fly).